The following is a 186-amino-acid chain: Ribosome-recycling factor (186 aa).

The protein belongs to the RRF family.

The protein localises to the cytoplasm. Functionally, responsible for the release of ribosomes from messenger RNA at the termination of protein biosynthesis. May increase the efficiency of translation by recycling ribosomes from one round of translation to another. This is Ribosome-recycling factor from Albidiferax ferrireducens (strain ATCC BAA-621 / DSM 15236 / T118) (Rhodoferax ferrireducens).